The chain runs to 205 residues: MIGHIQGVLTSKQPPEVVLDVQGIGYEIQLPMTCFYQLPPVGETIKLITHFVVREDAQLLYGFISASERSLFRLLLKTQGVGPKLALAILSGMSADEFVMAVNQNDVTRLVKLPGVGKKTAERLVIEMRDRLKDWQPSTPFTDRAPLDSQGMDAREHPADARTDAISALQSLGYKENQAEKALQKVYSAEHNSETLIRLALKQLS.

The interval 1–64 (MIGHIQGVLT…EDAQLLYGFI (64 aa)) is domain I. Positions 65-143 (SASERSLFRL…DWQPSTPFTD (79 aa)) are domain II. The tract at residues 136–157 (QPSTPFTDRAPLDSQGMDAREH) is disordered. The tract at residues 144–156 (RAPLDSQGMDARE) is flexible linker. The segment at 157–205 (HPADARTDAISALQSLGYKENQAEKALQKVYSAEHNSETLIRLALKQLS) is domain III.

This sequence belongs to the RuvA family. As to quaternary structure, homotetramer. Forms an RuvA(8)-RuvB(12)-Holliday junction (HJ) complex. HJ DNA is sandwiched between 2 RuvA tetramers; dsDNA enters through RuvA and exits via RuvB. An RuvB hexamer assembles on each DNA strand where it exits the tetramer. Each RuvB hexamer is contacted by two RuvA subunits (via domain III) on 2 adjacent RuvB subunits; this complex drives branch migration. In the full resolvosome a probable DNA-RuvA(4)-RuvB(12)-RuvC(2) complex forms which resolves the HJ.

The protein resides in the cytoplasm. The RuvA-RuvB-RuvC complex processes Holliday junction (HJ) DNA during genetic recombination and DNA repair, while the RuvA-RuvB complex plays an important role in the rescue of blocked DNA replication forks via replication fork reversal (RFR). RuvA specifically binds to HJ cruciform DNA, conferring on it an open structure. The RuvB hexamer acts as an ATP-dependent pump, pulling dsDNA into and through the RuvAB complex. HJ branch migration allows RuvC to scan DNA until it finds its consensus sequence, where it cleaves and resolves the cruciform DNA. The chain is Holliday junction branch migration complex subunit RuvA from Idiomarina loihiensis (strain ATCC BAA-735 / DSM 15497 / L2-TR).